Consider the following 339-residue polypeptide: MTDAPAHTRERVTISEVARVAGVSKATVSRYIGGDRQLLAEATAKRLEEVIERLGYRPNQMARGLKRGQTRLIGMLVADILNPYSVAVMHGVETACRQHGYSLVVCNTNRDDEQERHHLVALQSYNVEGLIVNTLGHHPGELLNLQRDIPMVLVDRQLPELNVDLVGLDNADAVEQALDHLQAQGYRDILAVSEPLDGTSSRLERVQAFGASISRRPGMRQQVLEIGAGLQGQLASFLAHSGHGPQAIFTFNGVATLAVTRALLEAGRNLVADVGLIALDDLDWYPLVGKGITALAQPTERIGVAAFESLLGRLRGDSGAARRIDFKANLIIRGSTQPQ.

Residues 12 to 67 (VTISEVARVAGVSKATVSRYIGGDRQLLAEATAKRLEEVIERLGYRPNQMARGLKR) form the HTH lacI-type domain. The segment at residues 14–33 (ISEVARVAGVSKATVSRYIG) is a DNA-binding region (H-T-H motif).

As to quaternary structure, homodimer in solution.

2-ketogluconate acts as a molecular effector and causes dissociation of PtxS from its target promoter. In terms of biological role, negatively regulates glucose metabolism by binding directly to the promoter region of the kgu and gad operons. It also negatively regulates its own synthesis. The polypeptide is HTH-type transcriptional regulator PtxS (Pseudomonas putida (strain ATCC 47054 / DSM 6125 / CFBP 8728 / NCIMB 11950 / KT2440)).